Consider the following 734-residue polypeptide: Ribosomal RNA large subunit methyltransferase K/L (734 aa).

In terms of domain architecture, THUMP spans 43–154 (VGYRSCLWSR…RNQLTLSLDL (112 aa)).

This sequence belongs to the methyltransferase superfamily. RlmKL family.

It is found in the cytoplasm. The enzyme catalyses guanosine(2445) in 23S rRNA + S-adenosyl-L-methionine = N(2)-methylguanosine(2445) in 23S rRNA + S-adenosyl-L-homocysteine + H(+). The catalysed reaction is guanosine(2069) in 23S rRNA + S-adenosyl-L-methionine = N(2)-methylguanosine(2069) in 23S rRNA + S-adenosyl-L-homocysteine + H(+). Specifically methylates the guanine in position 2445 (m2G2445) and the guanine in position 2069 (m7G2069) of 23S rRNA. The chain is Ribosomal RNA large subunit methyltransferase K/L from Hydrogenovibrio crunogenus (strain DSM 25203 / XCL-2) (Thiomicrospira crunogena).